A 450-amino-acid chain; its full sequence is UDP-N-acetylmuramoylalanine--D-glutamate ligase (450 aa).

Residue 112 to 118 (GSNGKTT) coordinates ATP.

Belongs to the MurCDEF family.

The protein localises to the cytoplasm. The enzyme catalyses UDP-N-acetyl-alpha-D-muramoyl-L-alanine + D-glutamate + ATP = UDP-N-acetyl-alpha-D-muramoyl-L-alanyl-D-glutamate + ADP + phosphate + H(+). The protein operates within cell wall biogenesis; peptidoglycan biosynthesis. In terms of biological role, cell wall formation. Catalyzes the addition of glutamate to the nucleotide precursor UDP-N-acetylmuramoyl-L-alanine (UMA). This chain is UDP-N-acetylmuramoylalanine--D-glutamate ligase, found in Cytophaga hutchinsonii (strain ATCC 33406 / DSM 1761 / CIP 103989 / NBRC 15051 / NCIMB 9469 / D465).